Reading from the N-terminus, the 111-residue chain is Nucleoid-associated protein PSEEN1789 (111 aa).

Disordered stretches follow at residues 1 to 25 (MMKGGMAGLMKQAQQMQEKMQKMQE) and 89 to 111 (NSQDKMGSMTAGMQLPPGFKMPF).

It belongs to the YbaB/EbfC family. Homodimer.

The protein resides in the cytoplasm. It is found in the nucleoid. In terms of biological role, binds to DNA and alters its conformation. May be involved in regulation of gene expression, nucleoid organization and DNA protection. The polypeptide is Nucleoid-associated protein PSEEN1789 (Pseudomonas entomophila (strain L48)).